Reading from the N-terminus, the 236-residue chain is Purine nucleoside phosphorylase DeoD-type (236 aa).

Position 5 (His-5) interacts with a purine D-ribonucleoside. Phosphate contacts are provided by residues Gly-21, Arg-25, Arg-44, and 88–91; that span reads RVGT. A purine D-ribonucleoside-binding positions include 180–182 and 204–205; these read EME and SD. Residue Asp-205 is the Proton donor of the active site.

It belongs to the PNP/UDP phosphorylase family. Homohexamer; trimer of homodimers.

It catalyses the reaction a purine D-ribonucleoside + phosphate = a purine nucleobase + alpha-D-ribose 1-phosphate. The catalysed reaction is a purine 2'-deoxy-D-ribonucleoside + phosphate = a purine nucleobase + 2-deoxy-alpha-D-ribose 1-phosphate. Its function is as follows. Catalyzes the reversible phosphorolytic breakdown of the N-glycosidic bond in the beta-(deoxy)ribonucleoside molecules, with the formation of the corresponding free purine bases and pentose-1-phosphate. The polypeptide is Purine nucleoside phosphorylase DeoD-type (Shewanella baltica (strain OS223)).